Reading from the N-terminus, the 370-residue chain is Actin-related protein 2/3 complex subunit 1A-B (370 aa).

WD repeat units lie at residues 6–45 (FLLE…WVKC), 50–89 (EHNG…WKPT), 140–179 (PIRS…VDEK), 202–241 (SSGG…SVSQ), 244–284 (TEFL…TFVS), and 322–365 (LHQN…SYIQ).

It belongs to the WD repeat ARPC1 family. Component of the Arp2/3 complex.

The protein localises to the cytoplasm. Its subcellular location is the cytoskeleton. The protein resides in the nucleus. Functionally, probably functions as a component of the Arp2/3 complex which is involved in regulation of actin polymerization and together with an activating nucleation-promoting factor (NPF) mediates the formation of branched actin networks. In addition to its role in the cytoplasmic cytoskeleton, the Arp2/3 complex also promotes actin polymerization in the nucleus, thereby regulating gene transcription and repair of damaged DNA. In Xenopus laevis (African clawed frog), this protein is Actin-related protein 2/3 complex subunit 1A-B (arpc1a-b).